We begin with the raw amino-acid sequence, 1649 residues long: eIF-2-alpha kinase GCN2 (1649 aa).

The tract at residues 1-26 (MAGGRGAAGRGPAEPQESYSQRQDHE) is disordered. The 113-residue stretch at 25–137 (HELQALEAIY…HHVQSFLSEH (113 aa)) folds into the RWD domain. Residues 146 to 205 (HEEMLERQAQEKQQRLLEARQKEEQEQREILHEIQKRKEEIKEEKKRKEMAKQERLEITS) adopt a coiled-coil conformation. The tract at residues 227-260 (HGGSPDFVGNGKARAHSSGRSRRERQYSVCSGEA) is disordered. Serine 230 is modified (phosphoserine). Residues 239-249 (ARAHSSGRSRR) are compositionally biased toward basic residues. 2 consecutive Protein kinase domains span residues 296 to 539 (VYNA…HSFI) and 590 to 1001 (FEEL…SELL). Residues 596-604 (LGKGAFGAV) and lysine 619 contribute to the ATP site. Residues 662-785 (PAVPGTPPPD…CNEKDSRHEI (124 aa)) are disordered. Threonine 667 is subject to Phosphothreonine. The span at 705–721 (LSSSVEWSTSAERSNSA) shows a compositional bias: polar residues. Composition is skewed to acidic residues over residues 731 to 740 (SSDEEDEDER) and 754 to 764 (SDSDIIFDNED). The active-site Proton acceptor is the aspartate 847. The residue at position 870 (threonine 870) is a Phosphothreonine. A phosphothreonine; by autocatalysis mark is found at threonine 899 and threonine 904. The histidyl-tRNA synthetase-like stretch occupies residues 1022 to 1493 (TDGKAYRTMM…DHVMQKLRTK (472 aa)). Lysine 1259 bears the N6-acetyllysine mark.

The protein belongs to the protein kinase superfamily. Ser/Thr protein kinase family. GCN2 subfamily. As to quaternary structure, homodimer; homodimerization is important for kinase activation by uncharged tRNAs. Interacts with GCN1; this interaction stimulates EIF2AK4/GCN2 kinase activity and is impaired by IMPACT upon a variety of stress conditions, such as amino acid depletion, UV-C irradiation, proteasome inhibitor treatment and glucose deprivation. Interacts with DNAJC3; this interaction inhibits EIF2AK4/GCN2 kinase activity during endoplasmic reticulum (ER), hypothermic and amino acid-starving stress conditions. Interacts with MAP3K20; activates EIF2AK4/GCN2 kinase activity in response to moderate ribotoxic stress. Post-translationally, autophosphorylated; autophosphorylation on Thr-899 is increased upon amino acid starvation and in UV irradiation cells and inhibited in presence of IMPACT.

It localises to the cytoplasm. It carries out the reaction L-seryl-[protein] + ATP = O-phospho-L-seryl-[protein] + ADP + H(+). It catalyses the reaction L-threonyl-[protein] + ATP = O-phospho-L-threonyl-[protein] + ADP + H(+). In terms of biological role, metabolic-stress sensing protein kinase that phosphorylates the alpha subunit of eukaryotic translation initiation factor 2 (EIF2S1/eIF-2-alpha) in response to low amino acid availability. Plays a role as an activator of the integrated stress response (ISR) required for adaptation to amino acid starvation. EIF2S1/eIF-2-alpha phosphorylation in response to stress converts EIF2S1/eIF-2-alpha into a global protein synthesis inhibitor, leading to a global attenuation of cap-dependent translation, and thus to a reduced overall utilization of amino acids, while concomitantly initiating the preferential translation of ISR-specific mRNAs, such as the transcriptional activator ATF4, and hence allowing ATF4-mediated reprogramming of amino acid biosynthetic gene expression to alleviate nutrient depletion. Required for the translational induction of protein kinase PRKCH following amino acid starvation. Binds uncharged tRNAs. Involved in cell cycle arrest by promoting cyclin D1 mRNA translation repression after the unfolded protein response pathway (UPR) activation or cell cycle inhibitor CDKN1A/p21 mRNA translation activation in response to amino acid deprivation. Plays a role in the consolidation of synaptic plasticity, learning as well as formation of long-term memory. Plays a role in neurite outgrowth inhibition. Plays a role in feeding behavior to maintain amino acid homeostasis; contributes to the innate aversion toward diets of imbalanced amino acid composition. Plays a proapoptotic role in response to glucose deprivation. Promotes global cellular protein synthesis repression in response to UV irradiation independently of the stress-activated protein kinase/c-Jun N-terminal kinase (SAPK/JNK) and p38 MAPK signaling pathways. Plays a role in the antiviral response against alphavirus infection; impairs early viral mRNA translation of the incoming genomic virus RNA, thus preventing alphavirus replication. This chain is eIF-2-alpha kinase GCN2, found in Rattus norvegicus (Rat).